The primary structure comprises 245 residues: Fibroblast growth factor 13 (245 aa).

The segment at 1–36 (MAAAIASSLIRQKRQAREREKSNACKCVSSPSKGKT) is disordered. A mediates targeting to the nucleus region spans residues 1–62 (MAAAIASSLI…GSKKRRRRRP (62 aa)). Positions 67–201 (KGIVTKLYSR…AHFLPKPLKV (135 aa)) are mediates interaction with sodium channels. The tract at residues 157–164 (SMIYRQQQ) is tubulin-binding domain necessary and sufficient for tubulin-binding. Serine 208 is modified (phosphoserine). The tract at residues 213 to 245 (TEFSRSGSGTPTKSRSVSGVLNGGKSMSHNEST) is disordered. A compositionally biased stretch (polar residues) spans 215–245 (FSRSGSGTPTKSRSVSGVLNGGKSMSHNEST).

Belongs to the heparin-binding growth factors family. Interacts with SCN8A; regulates SCN8A activity. Interacts with SCN1A; may regulate SCN1A activity. Interacts with SCN5A; the interaction is direct and may regulate SNC5A density at membranes and function. May also interact with SCN2A and SCN11A. Interacts with MAPK8IP2; may regulate the MAPK8IP2 scaffolding activity. Post-translationally, may be phosphorylated. In terms of tissue distribution, detected in brain, eye and heart. In brain, the different isoforms display different patterns of expression. Expressed in brain and heart (at protein level). Isoform 3 is highly expressed in cardiac myocytes while isoform 1 is the most abundant in brain.

Its subcellular location is the cell projection. The protein localises to the filopodium. The protein resides in the growth cone. It is found in the dendrite. It localises to the cell membrane. Its subcellular location is the sarcolemma. The protein localises to the cytoplasm. The protein resides in the nucleus. Its function is as follows. Microtubule-binding protein which directly binds tubulin and is involved in both polymerization and stabilization of microtubules. Through its action on microtubules, may participate to the refinement of axons by negatively regulating axonal and leading processes branching. Plays a crucial role in neuron polarization and migration in the cerebral cortex and the hippocampus. Regulates voltage-gated sodium channel transport and function. May also play a role in MAPK signaling. Required for the development of axonal initial segment-targeting inhibitory GABAergic synapses made by chandelier neurons. In terms of biological role, seems not to be involved in neuroblast polarization and migration but regulates axon branching. This chain is Fibroblast growth factor 13, found in Mus musculus (Mouse).